Consider the following 67-residue polypeptide: Conotoxin ArMLCL-012 (67 aa).

A signal peptide spans 1–19; that stretch reads MLCLPVFIILLLLASPAAS. The propeptide occupies 20–45; it reads NPLEKRIQSDLIRAALEDADTKNDPR. Cysteine 64 is modified (cysteine amide).

It belongs to the conotoxin T superfamily. Post-translationally, contains 2 disulfide bonds that can be either 'C1-C3, C2-C4' or 'C1-C4, C2-C3', since these disulfide connectivities have been observed for conotoxins with cysteine framework V (for examples, see AC P0DQQ7 and AC P81755). As to expression, expressed by the venom duct.

It localises to the secreted. The sequence is that of Conotoxin ArMLCL-012 from Conus arenatus (Sand-dusted cone).